Reading from the N-terminus, the 1373-residue chain is MTNCEKDEEFVCISCVEEVRYSFVSHLSEALRRKGINNVVVDVDIDDLLFKESQAKIEKAGVSVMVLPGNCDPSEVWLDKFAKVLECQRNNKDQAVVSVLYGDSLLRDQWLSELDFRGLSRIHQSRKECSDSILVEEIVRDVYETHFYVGRIGIYSKLLEIENMVNKQPIGIRCVGIWGMPGIGKTTLAKAVFDQMSSAFDASCFIEDYDKSIHEKGLYCLLEEQLLPGNDATIMKLNSLRDRLNSKRVLVVLDDVCNALVAESFLEGFDWLGPGSLIIITSRDKQVFRLCGINQIYEVQGLNEKEARQLFLLSASIKEDMGEQNLHELSVRVISYANGNPLAISVYGRELKGKKKLSEMETAFLKLKRRPPFKIVDAFKSSYDTLSDNEKNIFLDIACFFQGENVNYVIQLLEGCGFFPHVEIDVLVDKCLVTISENRVWLHKLTQDIGREIINGETVQIERRRRLWEPWSIKYLLEYNEHKANGEPKTTFKRAQGSEEIEGLFLDTSNLRFDLQPSAFKNMLNLRLLKIYCSNPEVHPVINFPTGSLHSLPNELRLLHWENYPLKSLPQNFDPRHLVEINMPYSQLQKLWGGTKNLEMLRTIRLCHSQHLVDIDDLLKAENLEVIDLQGCTRLQNFPAAGRLLRLRVVNLSGCIKIKSVLEIPPNIEKLHLQGTGILALPVSTVKPNHRELVNFLTEIPGLSEASKLERLTSLLESNSSCQDLGKLICLELKDCSCLQSLPNMANLDLNVLDLSGCSSLNSIQGFPRFLKQLYLGGTAIREVPQLPQSLEILNAHGSCLRSLPNMANLEFLKVLDLSGCSELETIQGFPRNLKELYFAGTTLREVPQLPLSLEVLNAHGSDSEKLPMHYKFNNFFDLSQQVVNDFFLKALTYVKHIPRGYTQELINKAPTFSFSAPSHTNQNATFDLQPGSSVMTRLNHSWRNTLVGFGMLVEVAFPEDYCDATDVGISCVCRWSNKEGRSCRIERNFHCWAPGKVVPKVRKDHTFVFSDVNMRPSTGEGNDPDIWAGLVVFEFFPINQQTKCLNDRFTVTRCGVRVINVATGNTSLENISLVLSLDPVEVSGYEVLRVSYDDLQEMDKVLFLYIASLFNDEDVDFVAPLIAGIDLDVSSGLKVLADVSLISVSSNGEIVMHSLQRQMGKEILHGQSMLLSDCESSMTENLSDVPKKEKKHRESKVKKVVSIPAIDEGDLWTWRKYGQKDILGSRFPRGYYRCAYKFTHGCKATKQVQRSETDSNMLAITYLSEHNHPRPTKRKALADSTRSTSSSICSAITTSASSRVFQNKDEPNKPHLPSSSTPPGNAAVLFKMTDMEEFQDNMEVDNDVVDTRTLALFPEFQHQPEEEYPWSTFFDD.

Positions Glu5 to His146 constitute a TIR domain. The region spanning Ile170 to His421 is the NB-ARC domain. Gly179–Thr186 is an ATP binding site. 9 LRR repeats span residues Ser498–Asn522, Asn535–Pro553, Asn554–Pro575, His577–Leu598, Ala621–Arg646, Pro665–Pro688, Leu742–Gly766, Pro768–Ile793, and Pro831–Leu854. A Nuclear localization signal motif is present at residues Arg988–Asp1005. Positions Ile1204–Pro1272 form a DNA-binding region, WRKY. The tract at residues Arg1300–Ala1323 is disordered.

Interacts with PopP2, a R.solanacearum type III effector.

The protein resides in the nucleus. Transcription factor. Interacts specifically with the W box (5'-(T)TGAC[CT]-3'), a frequently occurring elicitor-responsive cis-acting element. Also acts as a disease resistance protein involved in resistance to fungal and bacterial pathogens, including R.solanacearum, P.syringae pv. tomato and C.higginsianum. The chain is Disease resistance protein RRS1 from Arabidopsis thaliana (Mouse-ear cress).